Here is a 342-residue protein sequence, read N- to C-terminus: Large ribosomal subunit protein uL3 (342 aa).

Residues 1 to 22 (MGHRKLSSPRRGSAGLRPRKRA) form a disordered region.

It belongs to the universal ribosomal protein uL3 family. As to quaternary structure, part of the 50S ribosomal subunit. Forms a cluster with proteins L14 and L24e.

Functionally, one of the primary rRNA binding proteins, it binds directly near the 3'-end of the 23S rRNA, where it nucleates assembly of the 50S subunit. In Sulfolobus acidocaldarius (strain ATCC 33909 / DSM 639 / JCM 8929 / NBRC 15157 / NCIMB 11770), this protein is Large ribosomal subunit protein uL3.